The following is a 689-amino-acid chain: Transcription termination factor Rho (689 aa).

Polar residues predominate over residues 1–20 (MPRTPKNQNLEQNTQTQSLT). Disordered stretches follow at residues 1-90 (MPRT…KQPV) and 151-213 (AQAQ…NRNN). The segment covering 52-65 (PKRRGRKPNPKTKA) has biased composition (basic residues). Composition is skewed to low complexity over residues 170–183 (NAQQQGEAQAQNGE) and 191–213 (NNQNGKFNKFNKNNKFNKNNRNN). Residues 287–362 (IIYTEGVLEV…RRIDRVNFEE (76 aa)) enclose the Rho RNA-BD domain. ATP-binding positions include 405–410 (GKGQRS), 417–422 (RTGKTV), and arginine 448.

It belongs to the Rho family. In terms of assembly, homohexamer. The homohexamer assembles into an open ring structure.

Facilitates transcription termination by a mechanism that involves Rho binding to the nascent RNA, activation of Rho's RNA-dependent ATPase activity, and release of the mRNA from the DNA template. This is Transcription termination factor Rho from Fibrobacter succinogenes (strain ATCC 19169 / S85).